Reading from the N-terminus, the 435-residue chain is Serine--tRNA ligase (435 aa).

241-243 (TAE) is a binding site for L-serine. 272–274 (RSE) provides a ligand contact to ATP. Glu-295 is an L-serine binding site. 359 to 362 (EISS) lines the ATP pocket. Position 395 (Ser-395) interacts with L-serine.

Belongs to the class-II aminoacyl-tRNA synthetase family. Type-1 seryl-tRNA synthetase subfamily. As to quaternary structure, homodimer. The tRNA molecule binds across the dimer.

It localises to the cytoplasm. The enzyme catalyses tRNA(Ser) + L-serine + ATP = L-seryl-tRNA(Ser) + AMP + diphosphate + H(+). It catalyses the reaction tRNA(Sec) + L-serine + ATP = L-seryl-tRNA(Sec) + AMP + diphosphate + H(+). The protein operates within aminoacyl-tRNA biosynthesis; selenocysteinyl-tRNA(Sec) biosynthesis; L-seryl-tRNA(Sec) from L-serine and tRNA(Sec): step 1/1. Functionally, catalyzes the attachment of serine to tRNA(Ser). Is also able to aminoacylate tRNA(Sec) with serine, to form the misacylated tRNA L-seryl-tRNA(Sec), which will be further converted into selenocysteinyl-tRNA(Sec). This Actinobacillus pleuropneumoniae serotype 5b (strain L20) protein is Serine--tRNA ligase.